Here is a 423-residue protein sequence, read N- to C-terminus: Glycine amidinotransferase, mitochondrial (423 aa).

The N-terminal 43 residues, 1–43, are a transit peptide targeting the mitochondrion; that stretch reads MLRVRCLRGGSRGAEAVHYIGSRLGGSLTGWVQRTFQSTQAAT. Ser46 and Ser49 each carry phosphoserine. Residue Asp170 participates in arginine binding. Catalysis depends on residues Asp254 and His303. Positions 305, 322, 354, and 355 each coordinate arginine. The residue at position 385 (Lys385) is an N6-acetyllysine. Cys407 acts as the Amidino-cysteine intermediate in catalysis.

It belongs to the amidinotransferase family. Homodimer. In terms of tissue distribution, highly expressed in the kidney and pancreas, especially in the proximal tubules of the kidney, and alpha cells of the pancreatic islets (at protein level). Moderately expressed in liver hepatocytes (at protein level). Expressed in the kidney, pancreas, liver, colon, ileum, jejunum, heart and skeletal muscle. In reproductive tissues, expressed in the testis, epididymis, ovary, oviduct and uterus. Expressed throughout the brain in neurons, astrocytes and oligodendrocytes. In 12.5 dpc embryos, it is expressed in the middle part of the somites, hepatic primordium and wall of the dorsal aorta. Expressed in 15.5 dpc embryos in isolated cells throughout the central nervous system, skeletal muscles, gonad primordia, caudal somites, liver and pancreas, but not in the choroid plexus, root ganglia or kidney. Expressed in skeletal muscle, kidney, pancreas, central nervous system, liver and intestine epithelial cells, but not in epidermis, dermis, olfactory epithelium, trachea, lung, stomach or heart in 18.5 dpc embryos.

Its subcellular location is the mitochondrion inner membrane. The enzyme catalyses L-arginine + glycine = guanidinoacetate + L-ornithine. It catalyses the reaction 4-aminobutanoate + L-arginine = 4-guanidinobutanoate + L-ornithine. The catalysed reaction is beta-alanine + L-arginine = 3-guanidinopropanoate + L-ornithine. It carries out the reaction taurine + L-arginine = taurocyamine + L-ornithine. It participates in amine and polyamine biosynthesis; creatine biosynthesis; creatine from L-arginine and glycine: step 1/2. Functionally, transamidinase that catalyzes the transfer of the amidino group of L-arginine onto the amino moiety of acceptor metabolites such as glycine, beta-alanine, gamma-aminobutyric acid (GABA) and taurine yielding the corresponding guanidine derivatives. Catalyzes the rate-limiting step of creatine biosynthesis, namely the transfer of the amidino group from L-arginine to glycine to generate guanidinoacetate, which is then methylated by GAMT to form creatine. Provides creatine as a source for ATP generation in tissues with high energy demands, in particular skeletal muscle, heart and brain. The polypeptide is Glycine amidinotransferase, mitochondrial (Gatm) (Rattus norvegicus (Rat)).